The primary structure comprises 116 residues: Large ribosomal subunit protein bL19 (116 aa).

The protein belongs to the bacterial ribosomal protein bL19 family.

This protein is located at the 30S-50S ribosomal subunit interface and may play a role in the structure and function of the aminoacyl-tRNA binding site. This chain is Large ribosomal subunit protein bL19, found in Staphylococcus aureus (strain Mu3 / ATCC 700698).